Here is a 450-residue protein sequence, read N- to C-terminus: Phosphoglucosamine mutase (450 aa).

Ser101 serves as the catalytic Phosphoserine intermediate. 4 residues coordinate Mg(2+): Ser101, Asp242, Asp244, and Asp246. Ser101 is subject to Phosphoserine.

Belongs to the phosphohexose mutase family. The cofactor is Mg(2+). Post-translationally, activated by phosphorylation.

It catalyses the reaction alpha-D-glucosamine 1-phosphate = D-glucosamine 6-phosphate. Its function is as follows. Catalyzes the conversion of glucosamine-6-phosphate to glucosamine-1-phosphate. The sequence is that of Phosphoglucosamine mutase from Rhodopseudomonas palustris (strain BisA53).